Here is a 106-residue protein sequence, read N- to C-terminus: Large ribosomal subunit protein uL23 (106 aa).

The protein belongs to the universal ribosomal protein uL23 family. As to quaternary structure, part of the 50S ribosomal subunit. Contacts protein L29, and trigger factor when it is bound to the ribosome.

Functionally, one of the early assembly proteins it binds 23S rRNA. One of the proteins that surrounds the polypeptide exit tunnel on the outside of the ribosome. Forms the main docking site for trigger factor binding to the ribosome. The protein is Large ribosomal subunit protein uL23 of Neisseria meningitidis serogroup C / serotype 2a (strain ATCC 700532 / DSM 15464 / FAM18).